We begin with the raw amino-acid sequence, 374 residues long: Pectate lyase 3 (374 aa).

Residues 1-22 (MKYLLPSAAAGLLLLAAQPTMA) form the signal peptide. Residues Cys-93 and Cys-176 are joined by a disulfide bond. Residues Asp-150, Asp-152, Glu-187, and Asp-191 each contribute to the Ca(2+) site. The active site involves Arg-239. A disulfide bridge connects residues Cys-350 and Cys-373.

This sequence belongs to the polysaccharide lyase 1 family. PLADES subfamily. It depends on Ca(2+) as a cofactor.

The protein resides in the secreted. It carries out the reaction Eliminative cleavage of (1-&gt;4)-alpha-D-galacturonan to give oligosaccharides with 4-deoxy-alpha-D-galact-4-enuronosyl groups at their non-reducing ends.. It participates in glycan metabolism; pectin degradation; 2-dehydro-3-deoxy-D-gluconate from pectin: step 2/5. In terms of biological role, involved in maceration and soft-rotting of plant tissue. This Pectobacterium carotovorum (Erwinia carotovora) protein is Pectate lyase 3 (pel3).